We begin with the raw amino-acid sequence, 131 residues long: Proline-rich protein 3 (131 aa).

Residues 1 to 77 (LHRGPPGSRG…KEQRNPRRLK (77 aa)) are disordered. The span at 12–25 (MIPPLLSLPPPPRG) shows a compositional bias: pro residues. A compositionally biased stretch (gly residues) spans 28–44 (PLRGGLGPRSGPYGRGW). The C3H1-type zinc-finger motif lies at 98–126 (KSDRPVCRHFAKKGHCRYEDLCAFYHPGA).

The polypeptide is Proline-rich protein 3 (PRR3) (Sus scrofa (Pig)).